The chain runs to 68 residues: Protein transport protein Sec61 subunit gamma (68 aa).

The Cytoplasmic segment spans residues 1–32 (MDQVTKFIEPGRQFAKDSIRLVKRCTKPDRKE). The chain crosses the membrane as a helical span at residues 33 to 61 (FQKIAVATAIGFCIMGFIGFFVKLIHIPI). At 62–68 (NNIIVGS) the chain is on the extracellular side.

The protein belongs to the SecE/SEC61-gamma family. As to quaternary structure, heterotrimeric complex composed of SEC61-alpha, SEC61-beta and SEC61-gamma.

It localises to the endoplasmic reticulum membrane. Functionally, necessary for protein translocation in the endoplasmic reticulum. The protein is Protein transport protein Sec61 subunit gamma (SEC61G) of Gryllotalpa orientalis (Oriental mole cricket).